The following is a 618-amino-acid chain: MKPPDRPTPGRTDRILGVMGGMLRACAVPGQEGPPERDPLGPGSTKTESDCIEEDQTGQREPEVLAWAPQPESYSIAVSEGSMSASAVSGLAALSGPSSGLSSDPCSPIPPGPVTGLRRWLDHSKHCLSVETEAESGQTGQCENWTLGPTLTTGQELPELTLLTTLLEGPGDKAQPAEEETLSQAPKNEEEQKKMALERSMFVLGELVETERTYEDDLGQIVEGYMATMATQGVPESLRGRDRIVFGNIQQIYEWHRDYFLQELQQCLKDPDWLAQLFIKHERRLHMYVVYCQNKPKSEHVLSEFGDSYFEELRQQLGHRLQLNDLLIKPVQRIMKYQLLLKDFLKYYRRAGKDTEELEQAVEVMCFVPKRCNDMMSLGRLRGFEGKLTAQGKLLGQDTFLVTEPEAGGLLSSRGRERRVFLFEQIIIFSEALGGGGRGGAQPGYVYKNSIKVSCLGLEGNLQGNPCRFALTSRGPEGGIQRYVLQASDPAVSQAWIKQVAQILESQRDFLNALQSPIEYQRRESQTNSLGRPGGPWVGSPGRMRPGDLAQASMHTPINGSLPSLLLLPRGEVSRVLLPLDTQALSDTPQTPHDSPALPTVNTPPCQARLAKLDEDEL.

Disordered regions lie at residues 26–63 (CAVP…REPE) and 169–193 (GPGD…EEQK). In terms of domain architecture, DH spans 199-375 (RSMFVLGELV…CFVPKRCNDM (177 aa)). Residues 317 to 338 (LGHRLQLNDLLIKPVQRIMKYQ) form an important for binding to Rho GTPases region. A PH domain is found at 387–505 (KLTAQGKLLG…WIKQVAQILE (119 aa)). Residues 506–532 (SQRDFLNALQSPIEYQRRESQTNSLGR) form a sufficient to bind activated GNAQ region. 2 disordered regions span residues 521 to 556 (QRRE…SMHT) and 584 to 604 (ALSD…VNTP). Over residues 584–593 (ALSDTPQTPH) the composition is skewed to polar residues.

As to quaternary structure, interacts with activated GNAQ and GNA11. Interacts (via the DH domain) with POPDC1 (via the C-terminus cytoplasmic tail). Interacts with RHOA, CDC42 and RAC1. Highly expressed in excitable tissues, such as brain, heart and muscle. Elevated expression in hippocampus and cerebellum.

The protein localises to the cytoplasm. Its subcellular location is the myofibril. It localises to the sarcomere. It is found in the cell membrane. In terms of biological role, may play a role in actin cytoskeleton reorganization in different tissues since its activation induces formation of actin stress fibers. It works as a guanine nucleotide exchange factor for Rho family of small GTPases. Links specifically G alpha q/11-coupled receptors to RHOA activation. May be an important regulator of processes involved in axon and dendrite formation. In neurons seems to be an exchange factor primarily for RAC1. Involved in skeletal myogenesis. The sequence is that of Rho guanine nucleotide exchange factor 25 (Arhgef25) from Mus musculus (Mouse).